The chain runs to 846 residues: Translation initiation factor IF-2 (846 aa).

Residues 345-512 (SRAPVVTIMG…AVLLQSEVLE (168 aa)) enclose the tr-type G domain. The interval 354 to 361 (GHVDHGKT) is G1. Residue 354–361 (GHVDHGKT) participates in GTP binding. The tract at residues 379 to 383 (GITQH) is G2. The segment at 400-403 (DTPG) is G3. Residues 400–404 (DTPGH) and 454–457 (NKID) each bind GTP. The segment at 454–457 (NKID) is G4. The interval 490–492 (SAK) is G5.

The protein belongs to the TRAFAC class translation factor GTPase superfamily. Classic translation factor GTPase family. IF-2 subfamily.

The protein resides in the cytoplasm. One of the essential components for the initiation of protein synthesis. Protects formylmethionyl-tRNA from spontaneous hydrolysis and promotes its binding to the 30S ribosomal subunits. Also involved in the hydrolysis of GTP during the formation of the 70S ribosomal complex. The sequence is that of Translation initiation factor IF-2 from Francisella tularensis subsp. holarctica (strain FTNF002-00 / FTA).